The sequence spans 206 residues: RNA-binding protein with multiple splicing 2 (206 aa).

Residue S2 is modified to N-acetylserine. Residues 25 to 102 form the RRM domain; the sequence is RTLFVSGLPV…QTLRLEFAKA (78 aa). The interval 35–45 is important for homodimerization; the sequence is DIKPRELYLLF.

Homodimer. Interacts with EEF2.

Its subcellular location is the cytoplasm. The protein localises to the nucleus. The protein resides in the stress granule. Functionally, RNA-binding protein involved in the regulation of smooth muscle cell differentiation and proliferation in the gastrointestinal system. Binds NOG mRNA, the major inhibitor of the bone morphogenetic protein (BMP) pathway. Mediates an increase of NOG mRNA levels, thereby contributing to the negative regulation of BMP signaling pathway and promoting reversible dedifferentiation and proliferation of smooth muscle cells. Acts as a pre-mRNA alternative splicing regulator. Mediates ACTN1 and FLNB alternative splicing. Likely binds to mRNA tandem CAC trinucleotide or CA dinucleotide motifs. The chain is RNA-binding protein with multiple splicing 2 (Rbpms2) from Mus musculus (Mouse).